A 571-amino-acid polypeptide reads, in one-letter code: DDB1- and CUL4-associated factor 11 homolog (571 aa).

The segment at 51–75 is disordered; sequence RMKPNHSNDSDTDFSSDDEGCPKMT. Residues 60–69 are compositionally biased toward acidic residues; it reads SDTDFSSDDE. WD repeat units lie at residues 162–201, 266–305, 309–349, 357–396, 435–479, and 482–521; these read RVAT…SKYR, RDHC…RIRT, AHED…DGDV, GHRD…NMSG, GHSV…VSRR, and GHTA…EGVI.

The protein belongs to the WD repeat LEC14B family.

Its function is as follows. Involved in regulation of lifespan. Required for dopaminergic CEP neuron degeneration in response to Mn(2+). Inhibits the skn-1-mediated up-regulation of tatn-1. This is DDB1- and CUL4-associated factor 11 homolog from Caenorhabditis elegans.